The sequence spans 376 residues: Alanine racemase (376 aa).

Lysine 40 functions as the Proton acceptor; specific for D-alanine in the catalytic mechanism. Lysine 40 is subject to N6-(pyridoxal phosphate)lysine. Arginine 138 contributes to the substrate binding site. Catalysis depends on tyrosine 270, which acts as the Proton acceptor; specific for L-alanine. Methionine 317 is a binding site for substrate.

Belongs to the alanine racemase family. The cofactor is pyridoxal 5'-phosphate.

The enzyme catalyses L-alanine = D-alanine. It functions in the pathway amino-acid biosynthesis; D-alanine biosynthesis; D-alanine from L-alanine: step 1/1. Its function is as follows. Catalyzes the interconversion of L-alanine and D-alanine. May also act on other amino acids. This is Alanine racemase (alr) from Lactobacillus acidophilus (strain ATCC 700396 / NCK56 / N2 / NCFM).